The sequence spans 312 residues: Zinc-finger homeodomain protein 4 (312 aa).

Residues 20 to 74 (GGGGSHGHMIHHHDHHAANSAPPTHNNNNTTQPPPMPLHGNGHGNNYDHHHHQDP) form a disordered region. Residues 37–50 (ANSAPPTHNNNNTT) are compositionally biased toward low complexity. Residues 90-139 (YKECLKNHAAAMGGNATDGCGEFMPSGEDGSIEALTCSACNCHRNFHRKE) form a ZF-HD dimerization-type; degenerate zinc finger. The homeobox DNA-binding region spans 218–281 (KKRFRTKFTP…NNKIHFSKKN (64 aa)).

As to quaternary structure, homo- and heterodimer with other ZFHD proteins. Interacts with ZHD1, ZHD2, ZHD5, ZHD7, ZHD8, ZHD10 and ZHD11. Mostly expressed in flowers and inflorescence.

Its subcellular location is the nucleus. Its function is as follows. Putative transcription factor. Probably involved in the regulation of floral induction. The chain is Zinc-finger homeodomain protein 4 (ZHD4) from Arabidopsis thaliana (Mouse-ear cress).